The primary structure comprises 180 residues: uncharacterized protein (180 aa).

The signal sequence occupies residues 1–21 (MKQCIAFMAILALSLSAISEA). The segment at 23-81 (GGRGVRSSGYSRPVATKPAPAPKQTQTQQQSQQPDATFGQQNMQNTATNTPNNPNNRLA) is disordered. Residues 27–78 (VRSSGYSRPVATKPAPAPKQTQTQQQSQQPDATFGQQNMQNTATNTPNNPNN) show a composition bias toward low complexity.

This is an uncharacterized protein from Pasteurella multocida (strain Pm70).